The following is a 138-amino-acid chain: ATP synthase epsilon chain (138 aa).

It belongs to the ATPase epsilon chain family. F-type ATPases have 2 components, CF(1) - the catalytic core - and CF(0) - the membrane proton channel. CF(1) has five subunits: alpha(3), beta(3), gamma(1), delta(1), epsilon(1). CF(0) has three main subunits: a, b and c.

The protein resides in the cell inner membrane. Its function is as follows. Produces ATP from ADP in the presence of a proton gradient across the membrane. The chain is ATP synthase epsilon chain from Polynucleobacter necessarius subsp. necessarius (strain STIR1).